We begin with the raw amino-acid sequence, 332 residues long: Aquaporin Lacbi1:317173 (332 aa).

Residues 1 to 20 show a composition bias toward polar residues; that stretch reads MSGQHQITEQSSRNPLSRVS. The tract at residues 1–45 is disordered; it reads MSGQHQITEQSSRNPLSRVSTLLPEKPLSPTSTYAGTQKHPEAPR. The Cytoplasmic segment spans residues 1-66; that stretch reads MSGQHQITEQ…RNAIRKPMAE (66 aa). The chain crosses the membrane as a helical span at residues 67 to 87; sequence FFGVALLIIFGAGSACQVVLS. Over 88 to 100 the chain is Extracellular; sequence TNPDVASSARGSF. A helical transmembrane segment spans residues 101 to 121; sequence LSINFGWAIGIAMGVWVSGGI. Residues 122–144 are Cytoplasmic-facing; it reads SGGHINPAITIAMATYRGFPWRK. The NPA 1 motif lies at 127 to 129; sequence NPA. Residues 145–165 traverse the membrane as a helical segment; sequence VPSYILAQVLGGVVGAGLVYA. Residues 166–199 are Extracellular-facing; sequence NYIHAIDIFEGGHHIRTQATASLFATYALPYMTQ. The helical transmembrane segment at 200–220 threads the bilayer; it reads ASCFFSEFLATAVLSMMVFAL. Residues 221-230 lie on the Cytoplasmic side of the membrane; sequence TDKRNHSPTN. The helical transmembrane segment at 231–251 threads the bilayer; that stretch reads GLLPFALFILFVGLGASLGME. Residues 252–283 lie on the Extracellular side of the membrane; the sequence is TAYALNPARDFGPRLFLAMAGYGKALFNYRSQ. The short motif at 257–259 is the NPA 2 element; the sequence is NPA. The helical transmembrane segment at 284–304 threads the bilayer; that stretch reads YWLWAPIIAPVLGAQAGGLLY. Residues 305 to 332 are Cytoplasmic-facing; the sequence is DTFLNDGDNSPIKWRCASSQEHQLAEVV.

This sequence belongs to the MIP/aquaporin (TC 1.A.8) family.

It is found in the membrane. It carries out the reaction H2O(in) = H2O(out). The catalysed reaction is NH4(+)(in) = NH4(+)(out). Functionally, water channel required to facilitate the transport of water across membranes. Acts as the most efficient Laccaria water channel. In addition to water, also shows strong ammonium transport activity. May be involved in fungal nitrogen (ammonium) support of the plant host in symbiosis. The sequence is that of Aquaporin Lacbi1:317173 from Laccaria bicolor (strain S238N-H82 / ATCC MYA-4686) (Bicoloured deceiver).